We begin with the raw amino-acid sequence, 537 residues long: Di/tripeptide-binding protein 1 (537 aa).

An N-terminal signal peptide occupies residues 1–29 (MRRNAVIRSAIMPSLLGAALVAAVPQAFA).

The protein belongs to the bacterial solute-binding protein 5 family. The complex is composed of two ATP-binding proteins (DppD and DppF), two transmembrane proteins (DppB and DppC) and a solute-binding protein (DppA1). Five orthologous SBPs (DppA1-A5) are present in P.aeruginosa, which increases the substrate specificity of the DppBCDF transporter.

Functionally, part of the ABC transporter DppABCDF involved in the uptake of various di/tripeptides. Prefers dipeptides with acidic residues at the C-terminal end. Involved in the uptake of phaseolotoxin, a toxic tripeptide inhibiting the enzyme ornithine carbamoyltransferase. The protein is Di/tripeptide-binding protein 1 of Pseudomonas aeruginosa (strain UCBPP-PA14).